Here is a 430-residue protein sequence, read N- to C-terminus: Transcription factor PIF4 (430 aa).

5 disordered regions span residues 42–71, 97–136, 160–183, 223–266, and 405–430; these read QTHR…DQET, MDPL…VMPP, TVGP…SHDR, DRKR…NLSE, and SSPA…RLDH. The span at 43–60 shows a compositional bias: basic and acidic residues; the sequence is THREQTQTQKQDHHEEAL. The span at 61 to 71 shows a compositional bias: polar residues; that stretch reads RSSTFLEDQET. A compositionally biased stretch (pro residues) spans 126 to 136; the sequence is CPDPPPQVMPP. Polar residues predominate over residues 160–175; it reads TVGPSHCGSNPSQNDL. Residues 244–253 show a composition bias toward low complexity; sequence NKSNQRSGSN. Over residues 257-266 the composition is skewed to basic and acidic residues; the sequence is RAAEVHNLSE. Positions 257–306 constitute a bHLH domain; it reads RAAEVHNLSERRRRDRINERMKALQELIPHCSKTDKASILDEAIDYLKSL. The span at 405 to 419 shows a compositional bias: low complexity; it reads SSPAGQQSQQPSSVP.

It belongs to the bHLH protein family. As to quaternary structure, interacts preferentially with the Pfr form of phytochrome B (phyB). Binds DNA as a homodimer, but once bound to DNA, loses its capacity to interact with phyB. Interacts with APRR1/TOC1 and PIF3. Binds to RGL2 and RGA. Forms non-functional heterodimer with HFR1. Interacts with PHYB, CRY1 and CRY2 in the nucleus in response to low blue light (LBL). Interacts with FYPP1 and FYPP3. Associates to PTAC12/HMR/PAP5, which acts as a transcriptional coactivator to trigger the thermoresponsive growth-relevant genes and promote warm-temperature-dependent PIF4 accumulation. Interacts with MED14. Mainly expressed in leaves, stems and seedlings, and, to a lower extent, in fruits, flowers and roots.

The protein resides in the nucleus. Its function is as follows. Transcription factor acting negatively in the phytochrome B signaling pathway. May regulate the expression of a subset of genes involved in cell expansion by binding to the G-box motif. Activated by CRY1 and CRY2 in response to low blue light (LBL) by direct binding at chromatin on E-box variant 5'-CA[CT]GTG-3' to stimulate specific gene expression to adapt global physiology (e.g. hypocotyl elongation in low blue light). Element of a PIF4/HMR/MED14-dependent thermoresponsive process; collaboratively with its transcriptional coactivator PTAC12/HMR/PAP5, involved in the regulation of thermoresponsive growth-relevant genes (e.g. mainly involved in biosynthesis and signaling of the phytohormone auxin) leading to daytime warm temperature elicitation of MED14-dependent thermomorphogenesis (e.g. hypocotyl elongation). This is Transcription factor PIF4 from Arabidopsis thaliana (Mouse-ear cress).